The sequence spans 348 residues: Hereditary hemochromatosis protein homolog (348 aa).

An N-terminal signal peptide occupies residues 1 to 22 (MGPRARPALFFLILLRTVAAQG). The alpha-1 stretch occupies residues 23 to 114 (RPPRSHSLRY…IMDNHNHSKE (92 aa)). At 23 to 306 (RPPRSHSLRY…WEPSLSNTLV (284 aa)) the chain is on the extracellular side. N-linked (GlcNAc...) asparagine glycans are attached at residues asparagine 110, asparagine 130, and asparagine 234. The tract at residues 115–205 (SHTLQVILGC…ELGRGVLDQQ (91 aa)) is alpha-2. 2 disulfides stabilise this stretch: cysteine 124–cysteine 187 and cysteine 225–cysteine 282. Residues 206–297 (VPPLVKVTHH…GLDQPLTATW (92 aa)) are alpha-3. The Ig-like C1-type domain occupies 207–296 (PPLVKVTHHV…PGLDQPLTAT (90 aa)). Residues 298 to 306 (EPSLSNTLV) form a connecting peptide region. A helical transmembrane segment spans residues 307–330 (TGVISGIAVCVIIFFIGILFRILR). Residues 331-348 (KRQASRGAMGDYVLGECE) lie on the Cytoplasmic side of the membrane.

It belongs to the MHC class I family. As to quaternary structure, binds TFR through the extracellular domain in a pH-dependent manner.

It localises to the cell membrane. Functionally, binds to transferrin receptor (TFR) and reduces its affinity for iron-loaded transferrin. The chain is Hereditary hemochromatosis protein homolog (HFE) from Ceratotherium simum (White rhinoceros).